Reading from the N-terminus, the 101-residue chain is NAD(P)H-quinone oxidoreductase subunit 4L, chloroplastic (101 aa).

3 consecutive transmembrane segments (helical) span residues 2–22 (MLEHVLVLSAYLFSVGLYGLI), 32–52 (MCLELILNAVNINFVTFSDFF), and 61–81 (IFSIFVIAIAAAEAAIGLAIV).

It belongs to the complex I subunit 4L family. As to quaternary structure, NDH is composed of at least 16 different subunits, 5 of which are encoded in the nucleus.

The protein resides in the plastid. Its subcellular location is the chloroplast thylakoid membrane. The enzyme catalyses a plastoquinone + NADH + (n+1) H(+)(in) = a plastoquinol + NAD(+) + n H(+)(out). It catalyses the reaction a plastoquinone + NADPH + (n+1) H(+)(in) = a plastoquinol + NADP(+) + n H(+)(out). Its function is as follows. NDH shuttles electrons from NAD(P)H:plastoquinone, via FMN and iron-sulfur (Fe-S) centers, to quinones in the photosynthetic chain and possibly in a chloroplast respiratory chain. The immediate electron acceptor for the enzyme in this species is believed to be plastoquinone. Couples the redox reaction to proton translocation, and thus conserves the redox energy in a proton gradient. The chain is NAD(P)H-quinone oxidoreductase subunit 4L, chloroplastic from Daucus carota (Wild carrot).